A 272-amino-acid polypeptide reads, in one-letter code: NH(3)-dependent NAD(+) synthetase (272 aa).

45-52 (GISGGQDS) contacts ATP. A Mg(2+)-binding site is contributed by D51. Position 138 (R138) interacts with deamido-NAD(+). T158 is an ATP binding site. E163 lines the Mg(2+) pocket. K171 and D178 together coordinate deamido-NAD(+). Residues K187 and T209 each contribute to the ATP site. Deamido-NAD(+) is bound at residue 258-259 (HK).

This sequence belongs to the NAD synthetase family. Homodimer.

The enzyme catalyses deamido-NAD(+) + NH4(+) + ATP = AMP + diphosphate + NAD(+) + H(+). It participates in cofactor biosynthesis; NAD(+) biosynthesis; NAD(+) from deamido-NAD(+) (ammonia route): step 1/1. Catalyzes the ATP-dependent amidation of deamido-NAD to form NAD. Uses ammonia as a nitrogen source. The sequence is that of NH(3)-dependent NAD(+) synthetase from Bacillus velezensis (strain DSM 23117 / BGSC 10A6 / LMG 26770 / FZB42) (Bacillus amyloliquefaciens subsp. plantarum).